The sequence spans 426 residues: Glutamate-1-semialdehyde 2,1-aminomutase (426 aa).

Lysine 268 is modified (N6-(pyridoxal phosphate)lysine).

This sequence belongs to the class-III pyridoxal-phosphate-dependent aminotransferase family. HemL subfamily. Requires pyridoxal 5'-phosphate as cofactor.

The protein localises to the cytoplasm. It catalyses the reaction (S)-4-amino-5-oxopentanoate = 5-aminolevulinate. The protein operates within porphyrin-containing compound metabolism; protoporphyrin-IX biosynthesis; 5-aminolevulinate from L-glutamyl-tRNA(Glu): step 2/2. This is Glutamate-1-semialdehyde 2,1-aminomutase from Saccharolobus islandicus (strain Y.N.15.51 / Yellowstone #2) (Sulfolobus islandicus).